The following is a 667-amino-acid chain: Probable Na(+)/H(+) antiporter nhx-9 (667 aa).

The next 8 membrane-spanning stretches (helical) occupy residues 41–61 (VYVI…FNLM), 73–93 (LLII…LSGA), 97–117 (SHTF…YFMP), 128–148 (VLVF…GSLL), 165–185 (ILVF…AVFE), 192–212 (FLFI…VVLY), 236–256 (LSFF…AIAA), and 268–288 (ILAP…AEMV). The N-linked (GlcNAc...) asparagine glycan is linked to asparagine 310. 4 consecutive transmembrane segments (helical) span residues 325-345 (MLAQ…TISS), 351-371 (LYFI…GIVV), 390-410 (FIMS…VSIP), and 418-438 (MFIT…GITI). Positions 637 to 667 (TEQLPSETPFHSGRRQSTGDLNATRRADFNV) are disordered. Threonine 644 is modified (phosphothreonine).

It belongs to the monovalent cation:proton antiporter 1 (CPA1) transporter (TC 2.A.36) family. Post-translationally, phosphorylated. In early stage larva, expressed in the twin excretory cell processes. At later larval stages, expression is more restricted, resulting in a 'beads on a chain' appearance.

It localises to the cell membrane. Serves some physiological function other than regulation of cellular pH. This Caenorhabditis elegans protein is Probable Na(+)/H(+) antiporter nhx-9 (nhx-9).